The sequence spans 750 residues: Probable methylmalonyl-CoA mutase large subunit (750 aa).

6 residues coordinate (R)-methylmalonyl-CoA: Y91, M94, T101, R103, Y105, and S130. 2 residues coordinate cob(II)alamin: F133 and A155. T211 and Q213 together coordinate (R)-methylmalonyl-CoA. Cob(II)alamin contacts are provided by V222 and R223. Residues R223, H260, R299, and S301 each coordinate (R)-methylmalonyl-CoA. Residues G349, E386, A389, G628, H629, D630, R631, S674, L676, G705, and T728 each coordinate cob(II)alamin. Residues 616–748 (RPRILIAKMG…HRLAERLGYT (133 aa)) form the B12-binding domain.

It belongs to the methylmalonyl-CoA mutase family. Heterodimer of an alpha and a beta chain. It depends on adenosylcob(III)alamin as a cofactor.

It catalyses the reaction (R)-methylmalonyl-CoA = succinyl-CoA. The protein operates within metabolic intermediate metabolism; propanoyl-CoA degradation; succinyl-CoA from propanoyl-CoA: step 3/3. In terms of biological role, catalyzes the isomerization of succinyl-CoA to methylmalonyl-CoA during synthesis of propionate from tricarboxylic acid-cycle intermediates. In Mycobacterium bovis (strain ATCC BAA-935 / AF2122/97), this protein is Probable methylmalonyl-CoA mutase large subunit (mutB).